The primary structure comprises 83 residues: Short neurotoxin D (83 aa).

Positions 1–21 are cleaved as a signal peptide; sequence MKTLLLTLVVVTMVCLDLGYT. 4 disulfides stabilise this stretch: C24–C45, C38–C62, C64–C75, and C76–C81.

The protein belongs to the three-finger toxin family. Short-chain subfamily. Type I alpha-neurotoxin sub-subfamily. In terms of tissue distribution, expressed by the venom gland.

Its subcellular location is the secreted. Its function is as follows. Binds to muscle nicotinic acetylcholine receptor (nAChR) and inhibit acetylcholine from binding to the receptor, thereby impairing neuromuscular transmission. This is Short neurotoxin D from Laticauda colubrina (Yellow-lipped sea krait).